A 357-amino-acid polypeptide reads, in one-letter code: UDP-N-acetylglucosamine--N-acetylmuramyl-(pentapeptide) pyrophosphoryl-undecaprenol N-acetylglucosamine transferase (357 aa).

UDP-N-acetyl-alpha-D-glucosamine contacts are provided by residues 13-15, Arg-166, Ser-196, and Gln-291; that span reads SAG.

The protein belongs to the glycosyltransferase 28 family. MurG subfamily.

Its subcellular location is the cell membrane. The enzyme catalyses di-trans,octa-cis-undecaprenyl diphospho-N-acetyl-alpha-D-muramoyl-L-alanyl-D-glutamyl-meso-2,6-diaminopimeloyl-D-alanyl-D-alanine + UDP-N-acetyl-alpha-D-glucosamine = di-trans,octa-cis-undecaprenyl diphospho-[N-acetyl-alpha-D-glucosaminyl-(1-&gt;4)]-N-acetyl-alpha-D-muramoyl-L-alanyl-D-glutamyl-meso-2,6-diaminopimeloyl-D-alanyl-D-alanine + UDP + H(+). It functions in the pathway cell wall biogenesis; peptidoglycan biosynthesis. Functionally, cell wall formation. Catalyzes the transfer of a GlcNAc subunit on undecaprenyl-pyrophosphoryl-MurNAc-pentapeptide (lipid intermediate I) to form undecaprenyl-pyrophosphoryl-MurNAc-(pentapeptide)GlcNAc (lipid intermediate II). In Clostridium perfringens (strain SM101 / Type A), this protein is UDP-N-acetylglucosamine--N-acetylmuramyl-(pentapeptide) pyrophosphoryl-undecaprenol N-acetylglucosamine transferase.